Reading from the N-terminus, the 486-residue chain is Hexosaminidase D (486 aa).

The active-site Proton donor is Glu-149.

The protein belongs to the glycosyl hydrolase 20 family. Homodimer; disulfide-linked. As to expression, expressed in synovial fibroblasts and synovial membranes.

The protein localises to the cytoplasm. The protein resides in the nucleus. It is found in the extracellular vesicle. It carries out the reaction Hydrolysis of terminal non-reducing N-acetyl-D-hexosamine residues in N-acetyl-beta-D-hexosaminides.. Inhibited by O-(2-acetamido-2-deoxy-D-glucopyranosylidene)amino N-phenylcarbamate (PUGNAc). Inhibited by galacto-NAG-thiazoline. Has hexosaminidase activity. Responsible for the cleavage of the monosaccharides N-acetylglucosamine (GlcNAc) and N-acetylgalactosamine (GalNAc) from cellular substrates. Has a preference for galactosaminide over glucosaminide substrates. The chain is Hexosaminidase D from Homo sapiens (Human).